The chain runs to 105 residues: Thioredoxin (105 aa).

In terms of domain architecture, Thioredoxin spans 1–105 (MVNNVTDSSF…SLLDWINKSI (105 aa)). Residues cysteine 30 and cysteine 33 are joined by a disulfide bond.

Belongs to the thioredoxin family.

Functionally, component of the thioredoxin-thioredoxin reductase system. Participates in various redox reactions through the reversible oxidation of its active center dithiol to a disulfide and catalyzes dithiol-disulfide exchange reactions. The sequence is that of Thioredoxin (trxA) from Rickettsia prowazekii (strain Madrid E).